The primary structure comprises 264 residues: Catechol O-methyltransferase B (264 aa).

Residues 1-29 form the signal peptide; it reads MLGVLLCWCLGASVLLYVLYSWLIPAAVQ. Asn31 carries N-linked (GlcNAc...) asparagine glycosylation. S-adenosyl-L-methionine is bound by residues Val92, Ser122, Glu140, and Asp191. Asp191 provides a ligand contact to Mg(2+). Lys194 is a binding site for substrate. Asp219 and Asn220 together coordinate Mg(2+). Substrate contacts are provided by Asn220 and Glu249.

This sequence belongs to the class I-like SAM-binding methyltransferase superfamily. Cation-dependent O-methyltransferase family. It depends on Mg(2+) as a cofactor. As to expression, strongly expressed in eye, diencephalon, spinal cord, hindbrain, liver, kidney and telencephalon. Also detected at very low levels in muscle, spleen, anterior gut and heart. In eye, expressed strongly in retina. In brain, expressed in the central part of the telencephalon, the periventricular gray zone of the optic tectum, the periglomerular nucleus, the olfactory bulb, and the region adjacent to the diencephalic ventricle in the hypothalamus. Expressed in gill, with strongest expression in gill filaments nearest the gill arch, and in esophageal epithelium.

The protein localises to the secreted. It catalyses the reaction a catechol + S-adenosyl-L-methionine = a guaiacol + S-adenosyl-L-homocysteine + H(+). Catalyzes the O-methylation, and thereby the inactivation, of catecholamine neurotransmitters and catechol hormones. This is Catechol O-methyltransferase B from Danio rerio (Zebrafish).